The chain runs to 68 residues: DNA-directed RNA polymerase subunit omega (68 aa).

This sequence belongs to the RNA polymerase subunit omega family. The RNAP catalytic core consists of 2 alpha, 1 beta, 1 beta' and 1 omega subunit. When a sigma factor is associated with the core the holoenzyme is formed, which can initiate transcription.

It carries out the reaction RNA(n) + a ribonucleoside 5'-triphosphate = RNA(n+1) + diphosphate. Functionally, promotes RNA polymerase assembly. Latches the N- and C-terminal regions of the beta' subunit thereby facilitating its interaction with the beta and alpha subunits. The protein is DNA-directed RNA polymerase subunit omega of Citrifermentans bemidjiense (strain ATCC BAA-1014 / DSM 16622 / JCM 12645 / Bem) (Geobacter bemidjiensis).